A 157-amino-acid chain; its full sequence is MPRRRVAAKREILDDPKYGSQILAKFMNHVMESGKKAVAERIVYGALETVAARKTGTDPLELFEKALDAIAPLVEVKSRRVGGATYQVPVEVRPSRRNALAMRWLVDFARKRGEKSMALRLAGELLDAAEGKGAAVKKREDVHRMAEANKAFSHYRF.

It belongs to the universal ribosomal protein uS7 family. In terms of assembly, part of the 30S ribosomal subunit. Contacts proteins S9 and S11.

In terms of biological role, one of the primary rRNA binding proteins, it binds directly to 16S rRNA where it nucleates assembly of the head domain of the 30S subunit. Is located at the subunit interface close to the decoding center, probably blocks exit of the E-site tRNA. This Pseudomonas fluorescens (strain Pf0-1) protein is Small ribosomal subunit protein uS7.